Reading from the N-terminus, the 1239-residue chain is DNA polymerase subunit gamma-1 (1239 aa).

Positions 1–68 (MSRLLWRKVA…PQVLSSEGGQ (68 aa)) are disordered. Low complexity-rich tracts occupy residues 9–36 (VAGA…SDPS) and 44–60 (QQQQ…QQPQ). The does not contribute to polymerase and exonuclease enzymatic activities stretch occupies residues 43 to 55 (QQQQQQQQQQQQQ). The Exo I signature appears at 196–200 (VFDVE). The active-site Exonuclease activity is the Asp198. The Exo II signature appears at 267–275 (VGHNVSFDR). Ser306 contacts DNA. Positions 318 to 340 (GKHKVQPPTKQGQKSQRKARRGP) are disordered. The short motif at 395 to 403 (YCAQDVWAT) is the Exo III element. Residues 506-531 (EPATASKLPIEGAGAPGDPMDQEDLG) are disordered. The segment at 510–571 (ASKLPIEGAG…RPQHLPGHPG (62 aa)) is accessory-interacting determinant. Position 579 (Arg579) interacts with RNA. DNA is bound at residue Ser593. RNA is bound by residues His754, Gly763, and Lys768. DNA is bound by residues Lys806 and Thr849. Positions 858–864 (TWLTASN) are trigger loop. RNA is bound by residues Ser863 and Arg869. A Pol A motif is present at residues 887–896 (VGADVDSQEL). Residues Asp890, Val891, Ser893, Glu895, Arg943, Lys947, and Tyr951 each contribute to the a 2'-deoxyribonucleoside 5'-triphosphate site. The Mg(2+) site is built by Asp890 and Val891. Positions 943–958 (REHAKIFNYGRIYGAG) match the Pol B motif. 2 residues coordinate DNA: Thr1094 and Ser1095. Positions 1134-1141 (HDEVRYLV) match the Pol C motif. Asp1135 contacts a 2'-deoxyribonucleoside 5'-triphosphate. Asp1135 lines the Mg(2+) pocket.

This sequence belongs to the DNA polymerase type-A family. In terms of assembly, heterotrimer composed of a catalytic subunit and a homodimer of accessory subunits (POLG:POLG2). Interacts with TTC3. Interacts with LIG3. Requires Mg(2+) as cofactor.

The protein localises to the mitochondrion. It is found in the mitochondrion matrix. The protein resides in the mitochondrion nucleoid. It catalyses the reaction DNA(n) + a 2'-deoxyribonucleoside 5'-triphosphate = DNA(n+1) + diphosphate. It carries out the reaction a 3'-end 2'-deoxyribonucleotidyl-deoxyribonucleotide-DNA + H2O = a 3'-end 2'-deoxyribonucleotide-DNA + a 2'-deoxyribonucleoside 5'-phosphate + H(+). The catalysed reaction is a 5'-end 2'-deoxyribose-2'-deoxyribonucleotide-DNA = (2E,4S)-4-hydroxypenten-2-al-5-phosphate + a 5'-end 5'-phospho-2'-deoxyribonucleoside-DNA + H(+). Inhibited by dideoxynucleotides such as antiviral agent zalcitabine. In terms of biological role, catalytic subunit of DNA polymerase gamma solely responsible for replication of mitochondrial DNA (mtDNA). Replicates both heavy and light strands of the circular mtDNA genome using a single-stranded DNA template, RNA primers and the four deoxyribonucleoside triphosphates as substrates. Has 5' -&gt; 3' polymerase activity. Functionally interacts with TWNK and SSBP1 at the replication fork to form a highly processive replisome, where TWNK unwinds the double-stranded DNA template prior to replication and SSBP1 covers the parental heavy strand to enable continuous replication of the entire mitochondrial genome. A single nucleotide incorporation cycle includes binding of the incoming nucleotide at the insertion site, a phosphodiester bond formation reaction that extends the 3'-end of the primer DNA, and translocation of the primer terminus to the post-insertion site. After completing replication of a mtDNA strand, mediates 3' -&gt; 5' exonucleolytic degradation at the nick to enable proper ligation. Highly accurate due to high nucleotide selectivity and 3' -&gt; 5' exonucleolytic proofreading. Proficiently corrects base substitutions, single-base additions and deletions in non-repetitive sequences and short repeats, but displays lower proofreading activity when replicating longer homopolymeric stretches. Exerts exonuclease activity toward single-stranded DNA and double-stranded DNA containing 3'-terminal mispairs. When a misincorporation occurs, transitions from replication to a pro-nucleolytic editing mode and removes the missincorporated nucleoside in the exonuclease active site. Proceeds via an SN2 nucleolytic mechanism in which Asp-198 catalyzes phosphodiester bond hydrolysis and Glu-200 stabilizes the leaving group. As a result the primer strand becomes one nucleotide shorter and is positioned in the post-insertion site, ready to resume DNA synthesis. Exerts 5'-deoxyribose phosphate (dRP) lyase activity and mediates repair-associated mtDNA synthesis (gap filling) in base-excision repair pathway. Catalyzes the release of the 5'-terminal 2-deoxyribose-5-phosphate sugar moiety from incised apurinic/apyrimidinic (AP) sites to produce a substrate for DNA ligase. The dRP lyase reaction does not require divalent metal ions and likely proceeds via a Schiff base intermediate in a beta-elimination reaction mechanism. The polypeptide is DNA polymerase subunit gamma-1 (Homo sapiens (Human)).